The following is a 447-amino-acid chain: Serine/threonine-protein phosphatase 2A 55 kDa regulatory subunit B gamma isoform (447 aa).

7 WD repeats span residues 22 to 61 (TEAD…KNAP), 87 to 128 (EIEE…KRPE), 171 to 209 (GHTY…RSFN), 220 to 260 (DLTE…LCDK), 279 to 317 (EIIS…RPIE), 334 to 375 (ENDC…DVTL), and 410 to 446 (DFTK…NSDM).

This sequence belongs to the phosphatase 2A regulatory subunit B family. In terms of assembly, PP2A consists of a common heterodimeric core enzyme, composed of a 36 kDa catalytic subunit (subunit C) and a 65 kDa constant regulatory subunit (PR65 or subunit A), that associates with a variety of regulatory subunits. Proteins that associate with the core dimer include three families of regulatory subunits B (the R2/B/PR55/B55, R3/B''/PR72/PR130/PR59 and R5/B'/B56 families), the 48 kDa variable regulatory subunit, viral proteins, and cell signaling molecules. Interacts with IER5.

Functionally, the B regulatory subunit might modulate substrate selectivity and catalytic activity, and might also direct the localization of the catalytic enzyme to a particular subcellular compartment. This chain is Serine/threonine-protein phosphatase 2A 55 kDa regulatory subunit B gamma isoform (PPP2R2C), found in Homo sapiens (Human).